The sequence spans 347 residues: Phenylalanine--tRNA ligase alpha subunit (347 aa).

Glu-261 contacts Mg(2+).

Belongs to the class-II aminoacyl-tRNA synthetase family. Phe-tRNA synthetase alpha subunit type 1 subfamily. Tetramer of two alpha and two beta subunits. It depends on Mg(2+) as a cofactor.

The protein localises to the cytoplasm. The catalysed reaction is tRNA(Phe) + L-phenylalanine + ATP = L-phenylalanyl-tRNA(Phe) + AMP + diphosphate + H(+). This Streptococcus pyogenes serotype M3 (strain ATCC BAA-595 / MGAS315) protein is Phenylalanine--tRNA ligase alpha subunit.